A 200-amino-acid chain; its full sequence is Recombination protein RecR (200 aa).

A C4-type zinc finger spans residues 59–74 (CEICGNIDTRSPCTVC). One can recognise a Toprim domain in the interval 82 to 177 (SIIVVVADVA…KVTRLAHGVP (96 aa)).

It belongs to the RecR family.

In terms of biological role, may play a role in DNA repair. It seems to be involved in an RecBC-independent recombinational process of DNA repair. It may act with RecF and RecO. The chain is Recombination protein RecR from Nitrobacter hamburgensis (strain DSM 10229 / NCIMB 13809 / X14).